Here is a 473-residue protein sequence, read N- to C-terminus: MAVKTYNAGVKDYRNTYWEPDYSVKDTDILAVFKITPQAGVDREEAAAAVAAESSTGTWTTVWTDLLTDLDYYKGRAYRIEDVPGDDTCFYAFIAYPIDLFEEGSVVNVFTSLVGNVFGFKAVRALRLEDVRFPIAYVKTCGGPPHGIQVERDIMNKYGRPLLGCTIKPKLGLSAKNYGRACYEGLRGGLDFTKDDENVNSQPFMRWRQRFDFVMEAIQKAEAETGERKGHYLNVTAPTPEEMYKRAEYAKEIGAPIIMHDYITGGFCANTGLANWCRDNGMLLHIHRAMHAVLDRNPHHGIHFRVLTKILRLSGGDHLHSGTVVGKLEGDREATLGWIDIMRDRFIKEDRSRGIFFDQDWGSMPGVMPVASGGIHVWHMPALVTIFGDDSVLQFGGGTLGHPWGNAAGAAANRVALEACVEARNRGVAIEKEGKAVLTEAAKHSPELKIAMETWKEIKFEFDTVDKLDVAHK.

Residues Asn-116 and Thr-166 each contribute to the substrate site. The active-site Proton acceptor is the Lys-168. A substrate-binding site is contributed by Lys-170. Residues Lys-194, Asp-196, and Glu-197 each contribute to the Mg(2+) site. Position 194 is an N6-carboxylysine (Lys-194). The Proton acceptor role is filled by His-287. Positions 288, 320, and 372 each coordinate substrate.

This sequence belongs to the RuBisCO large chain family. Type I subfamily. Heterohexadecamer of 8 large chains and 8 small chains. It depends on Mg(2+) as a cofactor.

It catalyses the reaction 2 (2R)-3-phosphoglycerate + 2 H(+) = D-ribulose 1,5-bisphosphate + CO2 + H2O. The enzyme catalyses D-ribulose 1,5-bisphosphate + O2 = 2-phosphoglycolate + (2R)-3-phosphoglycerate + 2 H(+). Functionally, ruBisCO catalyzes two reactions: the carboxylation of D-ribulose 1,5-bisphosphate, the primary event in carbon dioxide fixation, as well as the oxidative fragmentation of the pentose substrate. Both reactions occur simultaneously and in competition at the same active site. This chain is Ribulose bisphosphate carboxylase large chain 2, found in Acidithiobacillus ferrooxidans (strain ATCC 23270 / DSM 14882 / CIP 104768 / NCIMB 8455) (Ferrobacillus ferrooxidans (strain ATCC 23270)).